A 352-amino-acid chain; its full sequence is uncharacterized protein (352 aa).

Residues 1–40 are disordered; the sequence is MTSTMKLFTDHAEISVRERPPQRNNNNQEQDNSNRPAPRR. Residues 8–21 show a composition bias toward basic and acidic residues; sequence FTDHAEISVRERPP. Low complexity predominate over residues 22–36; that stretch reads QRNNNNQEQDNSNRP. The helical transmembrane segment at 317–333 threads the bilayer; the sequence is MTITLPCGLTIAFFVYY.

The protein localises to the host cell membrane. This is an uncharacterized protein from Diadromus pulchellus idnoreovirus 1 (DpIRV-1).